Reading from the N-terminus, the 297-residue chain is Probable endonuclease 4 (297 aa).

Zn(2+) is bound by residues histidine 69, histidine 110, glutamate 145, aspartate 179, histidine 182, histidine 214, aspartate 227, histidine 229, and glutamate 259.

Belongs to the AP endonuclease 2 family. Zn(2+) serves as cofactor.

It carries out the reaction Endonucleolytic cleavage to 5'-phosphooligonucleotide end-products.. In terms of biological role, endonuclease IV plays a role in DNA repair. It cleaves phosphodiester bonds at apurinic or apyrimidinic (AP) sites, generating a 3'-hydroxyl group and a 5'-terminal sugar phosphate. The chain is Probable endonuclease 4 from Listeria monocytogenes serovar 1/2a (strain ATCC BAA-679 / EGD-e).